A 185-amino-acid polypeptide reads, in one-letter code: Translation initiation factor IF-3 (185 aa).

This sequence belongs to the IF-3 family. As to quaternary structure, monomer.

The protein resides in the cytoplasm. Its function is as follows. IF-3 binds to the 30S ribosomal subunit and shifts the equilibrium between 70S ribosomes and their 50S and 30S subunits in favor of the free subunits, thus enhancing the availability of 30S subunits on which protein synthesis initiation begins. The chain is Translation initiation factor IF-3 from Streptococcus pneumoniae (strain Hungary19A-6).